The sequence spans 420 residues: Histidine--tRNA ligase, chloroplastic (420 aa).

The protein belongs to the class-II aminoacyl-tRNA synthetase family.

It is found in the plastid. Its subcellular location is the chloroplast. The enzyme catalyses tRNA(His) + L-histidine + ATP = L-histidyl-tRNA(His) + AMP + diphosphate + H(+). This Gracilaria tenuistipitata var. liui (Red alga) protein is Histidine--tRNA ligase, chloroplastic.